We begin with the raw amino-acid sequence, 120 residues long: Cytochrome c6 (120 aa).

The signal sequence occupies residues 1-35 (MFKLFNQASRIFFGIALPCLIFLGGIFSLGNTALA). C49, C52, H53, and M93 together coordinate heme c.

The protein belongs to the cytochrome c family. PetJ subfamily. Monomer. Post-translationally, binds 1 heme c group covalently per subunit.

The protein localises to the cellular thylakoid lumen. Its function is as follows. Functions as an electron carrier between membrane-bound cytochrome b6-f and photosystem I in oxygenic photosynthesis. The chain is Cytochrome c6 (petJ) from Synechocystis sp. (strain ATCC 27184 / PCC 6803 / Kazusa).